Consider the following 630-residue polypeptide: Putative F-box/LRR-repeat protein At3g49150 (630 aa).

The F-box domain occupies lysine 15–alanine 63. LRR repeat units lie at residues cysteine 101–cysteine 129, arginine 152–lysine 178, leucine 180–asparagine 205, cysteine 228–aspartate 253, isoleucine 300–valine 325, aspartate 337–glycine 362, cysteine 406–tyrosine 436, aspartate 437–arginine 465, and aspartate 567–tryptophan 590.

The chain is Putative F-box/LRR-repeat protein At3g49150 from Arabidopsis thaliana (Mouse-ear cress).